We begin with the raw amino-acid sequence, 110 residues long: Cytochrome c oxidase subunit 4B (110 aa).

The next 3 helical transmembrane spans lie at 27 to 47 (YQVL…LTVA), 50 to 70 (GVGS…QVIF), and 88 to 108 (LFLY…VTII).

Belongs to the cytochrome c oxidase bacterial subunit 4 family.

It is found in the cell membrane. It catalyses the reaction 4 Fe(II)-[cytochrome c] + O2 + 8 H(+)(in) = 4 Fe(III)-[cytochrome c] + 2 H2O + 4 H(+)(out). The chain is Cytochrome c oxidase subunit 4B (ctaF) from Bacillus subtilis (strain 168).